Reading from the N-terminus, the 457-residue chain is 3-ketoacyl-CoA thiolase 5, peroxisomal (457 aa).

The transit peptide at 1–37 directs the protein to the peroxisome; that stretch reads MERAMERQKILLRHLNPVSSSNSSLKHEPSLLSPVNC. The active-site Acyl-thioester intermediate is C137. Catalysis depends on proton acceptor residues H394 and C426.

This sequence belongs to the thiolase-like superfamily. Thiolase family. Homodimer. In terms of tissue distribution, expressed in seedlings and wounded leaves.

The protein localises to the peroxisome. The enzyme catalyses an acyl-CoA + acetyl-CoA = a 3-oxoacyl-CoA + CoA. Its pathway is lipid metabolism; fatty acid metabolism. Functionally, probably involved in long chain fatty-acid beta-oxidation prior to gluconeogenesis during germination and subsequent seedling growth. Involved in systemic jasmonic acid (JA) biosynthesis after wounding and may be during senescence. This is 3-ketoacyl-CoA thiolase 5, peroxisomal (KAT5) from Arabidopsis thaliana (Mouse-ear cress).